Consider the following 240-residue polypeptide: 4-hydroxy-tetrahydrodipicolinate reductase (240 aa).

NAD(+)-binding positions include 79-81 and 103-106; these read ATT and SANM. Histidine 135 functions as the Proton donor/acceptor in the catalytic mechanism. Histidine 136 serves as a coordination point for (S)-2,3,4,5-tetrahydrodipicolinate. Residue lysine 139 is the Proton donor of the active site. Position 145 to 146 (145 to 146) interacts with (S)-2,3,4,5-tetrahydrodipicolinate; it reads GT.

Belongs to the DapB family.

It is found in the cytoplasm. It carries out the reaction (S)-2,3,4,5-tetrahydrodipicolinate + NAD(+) + H2O = (2S,4S)-4-hydroxy-2,3,4,5-tetrahydrodipicolinate + NADH + H(+). It catalyses the reaction (S)-2,3,4,5-tetrahydrodipicolinate + NADP(+) + H2O = (2S,4S)-4-hydroxy-2,3,4,5-tetrahydrodipicolinate + NADPH + H(+). Its pathway is amino-acid biosynthesis; L-lysine biosynthesis via DAP pathway; (S)-tetrahydrodipicolinate from L-aspartate: step 4/4. Functionally, catalyzes the conversion of 4-hydroxy-tetrahydrodipicolinate (HTPA) to tetrahydrodipicolinate. This is 4-hydroxy-tetrahydrodipicolinate reductase from Staphylococcus aureus (strain Mu3 / ATCC 700698).